A 36-amino-acid chain; its full sequence is ECRWFWGGCNNDADCCKHLECKRKWPHICLWDGTFT.

Disulfide bonds link cysteine 2-cysteine 16, cysteine 9-cysteine 21, and cysteine 15-cysteine 29.

Belongs to the neurotoxin 10 (Hwtx-1) family. Expressed by the venom gland.

It localises to the secreted. Its function is as follows. Gating-modifier toxin that targets both voltage-gated sodium and calcium channels, with described activities on human Nav1.7/SCN9A (IC(50)=5.5-7 nM), hNav1.6/SCN10A (IC(50)=9.9 nM), hNav1.4/SCN4A (IC(50)=62.9 nM), hCav3.2/CACNA1H (IC(50)=955.4 nM or 63.5% inhibition at 10 uM), hCav3.1/CACNA1G (95.1% inhibition at 10 uM), hCav3.3/CACNA1I (90.8% inhibition at 10 uM). Acts on Cav3 currents mainly by inducing a strong depolarizing shift in the current-voltage curve. In Pterinochilus murinus (Mombasa golden starburst baboon spider), this protein is Mu/omega-theraphotoxin-Pmu1a.